Reading from the N-terminus, the 556-residue chain is Formate--tetrahydrofolate ligase (556 aa).

65 to 72 lines the ATP pocket; it reads TPAGEGKT.

Belongs to the formate--tetrahydrofolate ligase family.

It carries out the reaction (6S)-5,6,7,8-tetrahydrofolate + formate + ATP = (6R)-10-formyltetrahydrofolate + ADP + phosphate. The protein operates within one-carbon metabolism; tetrahydrofolate interconversion. The chain is Formate--tetrahydrofolate ligase from Peptoclostridium acidaminophilum (Eubacterium acidaminophilum).